A 347-amino-acid chain; its full sequence is NADH-quinone oxidoreductase subunit H (347 aa).

Helical transmembrane passes span 14-34 (IMIG…AYIL), 82-102 (AVFL…WAVI), 115-135 (VGIL…IMGG), 161-181 (IGFV…TDIV), 198-218 (LLDW…ISAL), 258-278 (AIVL…LPPL), 285-305 (WVPG…MFGI), and 321-341 (LGWK…AFVL).

Belongs to the complex I subunit 1 family. As to quaternary structure, NDH-1 is composed of 14 different subunits. Subunits NuoA, H, J, K, L, M, N constitute the membrane sector of the complex.

Its subcellular location is the cell inner membrane. It carries out the reaction a quinone + NADH + 5 H(+)(in) = a quinol + NAD(+) + 4 H(+)(out). Its function is as follows. NDH-1 shuttles electrons from NADH, via FMN and iron-sulfur (Fe-S) centers, to quinones in the respiratory chain. The immediate electron acceptor for the enzyme in this species is believed to be ubiquinone. Couples the redox reaction to proton translocation (for every two electrons transferred, four hydrogen ions are translocated across the cytoplasmic membrane), and thus conserves the redox energy in a proton gradient. This subunit may bind ubiquinone. This chain is NADH-quinone oxidoreductase subunit H, found in Allorhizobium ampelinum (strain ATCC BAA-846 / DSM 112012 / S4) (Agrobacterium vitis (strain S4)).